A 417-amino-acid chain; its full sequence is Testis-specific Y-encoded-like protein 5 (417 aa).

Residues 1-25 (MSGRSRGRKSSRAKNRGKGRAKARV) are compositionally biased toward basic residues. Disordered regions lie at residues 1-55 (MSGR…QVQA), 93-112 (AAGDHGQAAARPGPGKAASL), 127-202 (GTVG…EGSM), and 391-417 (KGKEKEGRQGPGKQPMETTQPGVSQSN). Basic and acidic residues predominate over residues 27–37 (PAPDDAPRDPD). Positions 93–103 (AAGDHGQAAAR) are enriched in low complexity. Residues 182-191 (GEEKKEERDA) are compositionally biased toward basic and acidic residues. Over residues 406 to 417 (METTQPGVSQSN) the composition is skewed to polar residues.

The protein belongs to the nucleosome assembly protein (NAP) family. Interacts with USP7.

Functionally, involved in modulation of cell growth and cellular response to gamma radiation probably via regulation of the Akt signaling pathway. Involved in regulation of p53/TP53. Suppresses p53/TP53 protein levels and promotes its ubiquitination; the function is dependent on USP7 and independent on MDM2. Proposed to displace p53/TP53 from interaction with USP7. The polypeptide is Testis-specific Y-encoded-like protein 5 (TSPYL5) (Homo sapiens (Human)).